Here is a 658-residue protein sequence, read N- to C-terminus: Heat shock protein homolog SSE1 (658 aa).

The span at 614-627 (KRKEEERKSKKENA) shows a compositional bias: basic and acidic residues. Residues 614–658 (KRKEEERKSKKENAQEGTSSKPESKEESEAKEDNDEESDVASIDE) are disordered. Acidic residues predominate over residues 642 to 658 (EAKEDNDEESDVASIDE).

The protein belongs to the heat shock protein 70 family.

It is found in the cytoplasm. Its function is as follows. Required for normal growth at various temperatures. The protein is Heat shock protein homolog SSE1 (SSE1) of Encephalitozoon cuniculi (strain GB-M1) (Microsporidian parasite).